The following is a 190-amino-acid chain: MGRVTTPSEEDSNNGLPVQQPGTPNQRTRVPVSQFAPPNYQQANVNLSVGRPWSTGLFDCQADQANAVLTTIVPCVTFGQIAEVMDEGEMTCPLGTFMYLLMMPALCSHWVMGSKYREKMRRKFNLVEAPYSDCASHVLCPCCSLCQEYRELKIRNLDPSLGWNGILAQGQGQYEREAPSFAPTNQYMSK.

Positions 1–31 are disordered; sequence MGRVTTPSEEDSNNGLPVQQPGTPNQRTRVP. Positions 13–28 are enriched in polar residues; it reads NNGLPVQQPGTPNQRT. Threonine 23 carries the phosphothreonine modification. The helical transmembrane segment at 94 to 113 threads the bilayer; the sequence is LGTFMYLLMMPALCSHWVMG.

It belongs to the cornifelin family.

It is found in the cell membrane. Functionally, may be involved in heavy metals transport. The polypeptide is Protein PLANT CADMIUM RESISTANCE 8 (PCR8) (Arabidopsis thaliana (Mouse-ear cress)).